We begin with the raw amino-acid sequence, 161 residues long: ATP synthase subunit b 1 (161 aa).

Residues 5 to 25 (EFWVAVAFVIFCGIVWKAGGF) form a helical membrane-spanning segment.

Belongs to the ATPase B chain family. F-type ATPases have 2 components, F(1) - the catalytic core - and F(0) - the membrane proton channel. F(1) has five subunits: alpha(3), beta(3), gamma(1), delta(1), epsilon(1). F(0) has three main subunits: a(1), b(2) and c(10-14). The alpha and beta chains form an alternating ring which encloses part of the gamma chain. F(1) is attached to F(0) by a central stalk formed by the gamma and epsilon chains, while a peripheral stalk is formed by the delta and b chains.

The protein resides in the cell inner membrane. Functionally, f(1)F(0) ATP synthase produces ATP from ADP in the presence of a proton or sodium gradient. F-type ATPases consist of two structural domains, F(1) containing the extramembraneous catalytic core and F(0) containing the membrane proton channel, linked together by a central stalk and a peripheral stalk. During catalysis, ATP synthesis in the catalytic domain of F(1) is coupled via a rotary mechanism of the central stalk subunits to proton translocation. Component of the F(0) channel, it forms part of the peripheral stalk, linking F(1) to F(0). This is ATP synthase subunit b 1 from Methylobacterium sp. (strain 4-46).